We begin with the raw amino-acid sequence, 240 residues long: Uridylate kinase (240 aa).

Position 13–16 (13–16 (KLSG)) interacts with ATP. The involved in allosteric activation by GTP stretch occupies residues 21–26 (GEKGFG). Residue glycine 55 coordinates UMP. Residues glycine 56 and arginine 60 each coordinate ATP. Residues aspartate 75 and 136–143 (IGNPYFST) each bind UMP. ATP contacts are provided by asparagine 164, tyrosine 170, and aspartate 173.

The protein belongs to the UMP kinase family. In terms of assembly, homohexamer.

It localises to the cytoplasm. The catalysed reaction is UMP + ATP = UDP + ADP. The protein operates within pyrimidine metabolism; CTP biosynthesis via de novo pathway; UDP from UMP (UMPK route): step 1/1. Its activity is regulated as follows. Allosterically activated by GTP. Inhibited by UTP. Its function is as follows. Catalyzes the reversible phosphorylation of UMP to UDP. This chain is Uridylate kinase, found in Staphylococcus aureus (strain USA300).